The following is a 160-amino-acid chain: Cytochrome b6-f complex subunit 4 (160 aa).

Helical transmembrane passes span 36-56, 95-115, and 131-151; these read LLYIFPVCIFGTFAIVIGLSV, LLGVLLMAAVPAGLLTVPFIE, and TVFLLGTVVAVYLGIGSTFPI.

It belongs to the cytochrome b family. PetD subfamily. The 4 large subunits of the cytochrome b6-f complex are cytochrome b6, subunit IV (17 kDa polypeptide, petD), cytochrome f and the Rieske protein, while the 4 small subunits are petG, petL, petM and petN. The complex functions as a dimer.

The protein resides in the plastid. Its subcellular location is the chloroplast thylakoid membrane. In terms of biological role, component of the cytochrome b6-f complex, which mediates electron transfer between photosystem II (PSII) and photosystem I (PSI), cyclic electron flow around PSI, and state transitions. This chain is Cytochrome b6-f complex subunit 4, found in Stigeoclonium helveticum (Green alga).